The following is a 453-amino-acid chain: tRNA modification GTPase MnmE (453 aa).

Residues R22, E79, and K119 each coordinate (6S)-5-formyl-5,6,7,8-tetrahydrofolate. The 162-residue stretch at 215–376 folds into the TrmE-type G domain; the sequence is GMKVVIAGRP…LQQHLKSLMG (162 aa). K(+) is bound at residue N225. GTP is bound by residues 225–230, 244–250, 269–272, and 334–337; these read NAGKSS, TEIAGTT, DTAG, and NKAD. Mg(2+) is bound at residue S229. Residues T244, I246, and T249 each coordinate K(+). T250 provides a ligand contact to Mg(2+). A (6S)-5-formyl-5,6,7,8-tetrahydrofolate-binding site is contributed by K453.

This sequence belongs to the TRAFAC class TrmE-Era-EngA-EngB-Septin-like GTPase superfamily. TrmE GTPase family. As to quaternary structure, homodimer. Heterotetramer of two MnmE and two MnmG subunits. K(+) is required as a cofactor.

It is found in the cytoplasm. Functionally, exhibits a very high intrinsic GTPase hydrolysis rate. Involved in the addition of a carboxymethylaminomethyl (cmnm) group at the wobble position (U34) of certain tRNAs, forming tRNA-cmnm(5)s(2)U34. The polypeptide is tRNA modification GTPase MnmE (Shewanella woodyi (strain ATCC 51908 / MS32)).